We begin with the raw amino-acid sequence, 778 residues long: Serine/threonine-protein kinase BRSK1 (778 aa).

The span at 1–12 (MSSGAKEGGGGS) shows a compositional bias: gly residues. Residues 1–29 (MSSGAKEGGGGSPAYHLPHPHPHPPQHAQ) form a disordered region. The 252-residue stretch at 34 to 285 (YRLEKTLGKG…LEQIQKHPWY (252 aa)) folds into the Protein kinase domain. Residues 40 to 48 (LGKGQTGLV) and Lys63 contribute to the ATP site. The Proton acceptor role is filled by Asp156. Phosphothreonine; by LKB1 is present on Thr189. The UBA domain maps to 314-356 (ELDPDVLESMASLGCFRDRERLHRELRSEEENQEKMIYYLLLD). Positions 362–383 (PSCEDQDLPPRNDVDPPRKRVD) are enriched in basic and acidic residues. Residues 362-548 (PSCEDQDLPP…SPGGGVGGAA (187 aa)) are disordered. Phosphoserine is present on residues Ser399, Ser443, Ser447, and Ser450. The segment covering 430-457 (SRSVSGASTGLSSSPLSSPRSPVFSFSP) has biased composition (low complexity). An omega-N-methylarginine mark is found at Arg466, Arg481, Arg484, and Arg498. Pro residues predominate over residues 491–508 (QPPPPSARSTPLPGPPGS). Phosphoserine is present on Ser508. Positions 509 to 533 (PRSSGGTPLHSPLHTPRASPTGTPG) are enriched in low complexity. Arg525 is modified (omega-N-methylarginine). A phosphothreonine mark is found at Thr529 and Thr535. The residue at position 550 (Arg550) is an Omega-N-methylarginine. A Phosphothreonine modification is found at Thr583. A phosphoserine mark is found at Ser586, Ser587, and Ser601. A disordered region spans residues 719–778 (QPSVQALADEKNGAQTRPAGAPPRSLQPPPGRPDPELSSSPRRGPPKDKKLLATNGTPLP).

The protein belongs to the protein kinase superfamily. CAMK Ser/Thr protein kinase family. SNF1 subfamily. Mg(2+) serves as cofactor. Phosphorylated at Thr-189 by STK11/LKB1 in complex with STE20-related adapter-alpha (STRADA) pseudo kinase and CAB39. Not phosphorylated at Thr-189 by CaMKK2. In contrast, it is phosphorylated and activated by CaMKK1. May be inactivated via dephosphorylation of Thr-189 by PP2C. In terms of tissue distribution, widely expressed, with highest levels in brain and testis. Protein levels remain constant throughout the cell cycle.

The protein resides in the cytoplasm. It is found in the nucleus. Its subcellular location is the cytoskeleton. The protein localises to the microtubule organizing center. It localises to the centrosome. The protein resides in the synapse. It is found in the presynaptic active zone. Its subcellular location is the cytoplasmic vesicle. The protein localises to the secretory vesicle. It localises to the synaptic vesicle. The catalysed reaction is L-seryl-[protein] + ATP = O-phospho-L-seryl-[protein] + ADP + H(+). It carries out the reaction L-threonyl-[protein] + ATP = O-phospho-L-threonyl-[protein] + ADP + H(+). The enzyme catalyses L-seryl-[tau protein] + ATP = O-phospho-L-seryl-[tau protein] + ADP + H(+). It catalyses the reaction L-threonyl-[tau protein] + ATP = O-phospho-L-threonyl-[tau protein] + ADP + H(+). Activated by phosphorylation on Thr-189 by STK11/LKB1. Functionally, serine/threonine-protein kinase that plays a key role in polarization of neurons and centrosome duplication. Phosphorylates CDC25B, CDC25C, MAPT/TAU, RIMS1, TUBG1, TUBG2 and WEE1. Following phosphorylation and activation by STK11/LKB1, acts as a key regulator of polarization of cortical neurons, probably by mediating phosphorylation of microtubule-associated proteins such as MAPT/TAU at 'Thr-529' and 'Ser-579'. Also regulates neuron polarization by mediating phosphorylation of WEE1 at 'Ser-642' in postmitotic neurons, leading to down-regulate WEE1 activity in polarized neurons. In neurons, localizes to synaptic vesicles and plays a role in neurotransmitter release, possibly by phosphorylating RIMS1. Also acts as a positive regulator of centrosome duplication by mediating phosphorylation of gamma-tubulin (TUBG1 and TUBG2) at 'Ser-131', leading to translocation of gamma-tubulin and its associated proteins to the centrosome. Involved in the UV-induced DNA damage checkpoint response, probably by inhibiting CDK1 activity through phosphorylation and activation of WEE1, and inhibition of CDC25B and CDC25C. The polypeptide is Serine/threonine-protein kinase BRSK1 (BRSK1) (Homo sapiens (Human)).